An 818-amino-acid chain; its full sequence is Cation/H(+) antiporter 6A (818 aa).

The next 13 helical transmembrane spans lie at 51-71 (NFWE…FFIW), 88-110 (FTYM…KSWI), 123-143 (VAET…GVTM), 156-176 (SVIG…TFRY), 192-212 (LIIF…LKDL), 222-242 (IALS…FFNA), 248-268 (LYGF…ICVV), 288-308 (FYLY…NKVI), 310-330 (LFGP…YPLG), 340-360 (FNLG…VDLL), 376-396 (IYEV…VTTI), 409-429 (FALA…YTYA), and 438-458 (EVFT…PMLL).

The protein belongs to the monovalent cation:proton antiporter 2 (CPA2) transporter (TC 2.A.37) family. CHX (TC 2.A.37.4) subfamily. As to expression, preferentially expressed in pollen.

The protein localises to the membrane. In terms of biological role, may operate as a cation/H(+) antiporter. The polypeptide is Cation/H(+) antiporter 6A (CHX6a) (Arabidopsis thaliana (Mouse-ear cress)).